The chain runs to 512 residues: uncharacterized protein (512 aa).

2 helical membrane-spanning segments follow: residues 20–40 and 222–242; these read IFPV…IYIW and GIAL…FGYI. Residues 297-512 form the Histidine kinase domain; it reads EQLIQSIEQT…TLMCYQIPLV (216 aa). Position 325 is a phosphohistidine; by autocatalysis (H325).

In terms of processing, autophosphorylated.

The protein resides in the cell membrane. It catalyses the reaction ATP + protein L-histidine = ADP + protein N-phospho-L-histidine.. Its function is as follows. Probable member of the two-component regulatory system SE_0166/SE_0165. May activate SE_0165 by phosphorylation. This is an uncharacterized protein from Staphylococcus epidermidis (strain ATCC 12228 / FDA PCI 1200).